A 112-amino-acid polypeptide reads, in one-letter code: Large ribosomal subunit protein bL17 (112 aa).

Belongs to the bacterial ribosomal protein bL17 family. In terms of assembly, part of the 50S ribosomal subunit. Contacts protein L32.

In Desulforamulus reducens (strain ATCC BAA-1160 / DSM 100696 / MI-1) (Desulfotomaculum reducens), this protein is Large ribosomal subunit protein bL17.